A 689-amino-acid chain; its full sequence is MTTQNFLAEIGTEELPPKALKKLATAFAENMELELNQAGLAFESVQWFAAPRRLAVKVLALATSQPSKEIEKRGPAVSAAFDAEGKPTKAAEGWARGCGISVEQAERVATDKGEWLVHRATIEGQPTKNLLKDMVANALAKLPIPKPMRWADKTVQFIRPVHTVTMLLGDELIEGEILGVESARTLRGHRFLGEREFQISHADQYPALLKEKGSVVADFNDRKALILAKSQEKATALGGVADIEDDLLDEVTSLVEYPNVLAAKFEERFLAVPAEALVYTMKGDQKYFPIYDKDGKLLPHFIFVSNINPDDPSKIIEGNEKVVRPRLTDAEFFFKTDLKQRLEDQLPRLETVLFQQQLGTLRDKTARIEQLAGEIAKQIGADEVKAKRAGLLSKCDLMTNMVFEFTDTQGVMGMHYARHDGEDEEVAVALNEQYMPRFAGDELPKSLVASAVALADKFDTLTGIFGIGQQPKGSADPFALRRAALGALRIIVEKNLPLDLAEIVKKSSALFGDKLTNANVVEDVVEFMLGRFRAWYQDEGIAVDVIQAVLARRPTKPSDFDARVRAVSHFRALEAAEALAAANKRVSNILAKVEGELPANIDTTLCAEAAEKVLAEQVIALQAELAPLFAKGEYQVALDRLAALREPVDTFFDNVMVNAENPQLRQNRLAILNNLRNLFLQVADISLLQ.

This sequence belongs to the class-II aminoacyl-tRNA synthetase family. In terms of assembly, tetramer of two alpha and two beta subunits.

It is found in the cytoplasm. The enzyme catalyses tRNA(Gly) + glycine + ATP = glycyl-tRNA(Gly) + AMP + diphosphate. This is Glycine--tRNA ligase beta subunit (glyS) from Pasteurella multocida (strain Pm70).